The primary structure comprises 216 residues: uncharacterized protein (216 aa).

A helical membrane pass occupies residues 1-21; sequence MTIVHFVGSLFFFFFFSYIFF.

The protein resides in the membrane. This is an uncharacterized protein from Saccharomyces cerevisiae (strain ATCC 204508 / S288c) (Baker's yeast).